The sequence spans 502 residues: Probable cytosol aminopeptidase (502 aa).

Mn(2+) contacts are provided by K270 and D275. K282 is a catalytic residue. D293, D352, and E354 together coordinate Mn(2+). R356 is a catalytic residue.

This sequence belongs to the peptidase M17 family. Mn(2+) serves as cofactor.

It is found in the cytoplasm. The enzyme catalyses Release of an N-terminal amino acid, Xaa-|-Yaa-, in which Xaa is preferably Leu, but may be other amino acids including Pro although not Arg or Lys, and Yaa may be Pro. Amino acid amides and methyl esters are also readily hydrolyzed, but rates on arylamides are exceedingly low.. The catalysed reaction is Release of an N-terminal amino acid, preferentially leucine, but not glutamic or aspartic acids.. In terms of biological role, presumably involved in the processing and regular turnover of intracellular proteins. Catalyzes the removal of unsubstituted N-terminal amino acids from various peptides. The polypeptide is Probable cytosol aminopeptidase (Buchnera aphidicola subsp. Schizaphis graminum (strain Sg)).